The chain runs to 925 residues: Periplasmic nitrate reductase (925 aa).

Residues 1-30 (MDRREFIKSSAAAAACSAAGIAVPSSLSAA) constitute a signal peptide (tat-type signal). The region spanning 36-92 (WRWDKSACRFCGTGCGIMVATKNGKIVAVKGDPLAPVNRGLNCIKGYFNAKIMYGED) is the 4Fe-4S Mo/W bis-MGD-type domain. The [4Fe-4S] cluster site is built by cysteine 43, cysteine 46, cysteine 50, and cysteine 78. Mo-bis(molybdopterin guanine dinucleotide) contacts are provided by residues lysine 80, glutamine 148, asparagine 173, cysteine 177, 210–217 (WGANMAEM), methionine 418, glutamine 422, asparagine 528, 553–554 (SD), lysine 576, aspartate 603, and 815–824 (TGRVLEHWHS). Tryptophan 891 contacts substrate. Residues asparagine 899 and lysine 916 each contribute to the Mo-bis(molybdopterin guanine dinucleotide) site.

This sequence belongs to the prokaryotic molybdopterin-containing oxidoreductase family. NasA/NapA/NarB subfamily. As to quaternary structure, component of the periplasmic nitrate reductase NapAB complex composed of NapA and NapB. It depends on [4Fe-4S] cluster as a cofactor. The cofactor is Mo-bis(molybdopterin guanine dinucleotide). Predicted to be exported by the Tat system. The position of the signal peptide cleavage has not been experimentally proven.

It localises to the periplasm. The enzyme catalyses 2 Fe(II)-[cytochrome] + nitrate + 2 H(+) = 2 Fe(III)-[cytochrome] + nitrite + H2O. Its function is as follows. Catalytic subunit of the periplasmic nitrate reductase complex NapAB. Receives electrons from NapB and catalyzes the reduction of nitrate to nitrite. The polypeptide is Periplasmic nitrate reductase (Campylobacter fetus subsp. fetus (strain 82-40)).